The primary structure comprises 167 residues: uncharacterized protein (167 aa).

To A.aeolicus aq_328.

This is an uncharacterized protein from Aquifex aeolicus (strain VF5).